The following is a 235-amino-acid chain: Carbonic anhydrase 1 (235 aa).

Residues 1-235 (GNKQSPVDIK…LKGRTVKASF (235 aa)) enclose the Alpha-carbonic anhydrase domain. His40 serves as the catalytic Proton donor/acceptor. Zn(2+) is bound by residues His69, His71, and His94. Substrate-binding positions include Thr174 and 174–175 (TH).

This sequence belongs to the alpha-carbonic anhydrase family. The cofactor is Zn(2+).

The protein resides in the cytoplasm. The catalysed reaction is hydrogencarbonate + H(+) = CO2 + H2O. It catalyses the reaction urea = cyanamide + H2O. Inhibited by acetazolamide. Its function is as follows. Catalyzes the reversible hydration of carbon dioxide. Can hydrate cyanamide to urea. This Oryctolagus cuniculus (Rabbit) protein is Carbonic anhydrase 1 (CA1).